We begin with the raw amino-acid sequence, 412 residues long: BURP domain-containing protein 13 (412 aa).

An N-terminal signal peptide occupies residues 1–23 (MARFLLLLVAVAAAAAVLSLGDA). The 217-residue stretch at 190–406 (FFHEEAVRVG…PYGHIVWAKN (217 aa)) folds into the BURP domain. A glycan (N-linked (GlcNAc...) asparagine) is linked at asparagine 369.

Specifically expressed in anthers, in the tapetum and microspores (at protein level).

In terms of biological role, required for pollen development. Probably synthesized in the tapetum, packaged in Ubisch bodies and transported at appropriate stages to the micropsores. This Oryza sativa subsp. japonica (Rice) protein is BURP domain-containing protein 13 (BURP13).